A 418-amino-acid chain; its full sequence is Multidrug resistance protein MdtG (418 aa).

11 helical membrane passes run 19-39 (IGCF…PLYV), 56-76 (LVFS…GGLA), 90-110 (LGMA…QFLI), 113-133 (ALLG…ATQI), 144-164 (TLST…GVLA), 171-191 (PVFF…LLFI), 222-242 (LFVT…ILTL), 251-271 (VANI…AALI), 288-308 (ILIA…FVQT), 317-337 (FLLG…LVYN), and 376-396 (AVFL…GLSL).

Belongs to the major facilitator superfamily. DHA1 family. MdtG (TC 2.A.1.2.20) subfamily.

It localises to the cell inner membrane. This is Multidrug resistance protein MdtG from Enterobacter lignolyticus (strain SCF1).